Consider the following 172-residue polypeptide: Small ribosomal subunit protein uS5 (172 aa).

Residues 15–78 enclose the S5 DRBM domain; that stretch reads YIEKLVNIRR…DKARKRMKSV (64 aa).

This sequence belongs to the universal ribosomal protein uS5 family. In terms of assembly, part of the 30S ribosomal subunit. Contacts proteins S4 and S8.

With S4 and S12 plays an important role in translational accuracy. Its function is as follows. Located at the back of the 30S subunit body where it stabilizes the conformation of the head with respect to the body. The polypeptide is Small ribosomal subunit protein uS5 (Ruthia magnifica subsp. Calyptogena magnifica).